The following is a 299-amino-acid chain: Kynurenine formamidase-like hydrolase fscH (299 aa).

An HGGXW motif is present at residues 48 to 52 (HGGAW). A disordered region spans residues 90-110 (SPRTPSQPVPSGGHVGGEQQA). The Nucleophile role is filled by Ser-142.

This sequence belongs to the kynurenine formamidase family.

It participates in secondary metabolite biosynthesis. Functionally, kynurenine formamidase-like hydrolase; part of the fragmented gene cluster that mediates the biosynthesis of fusarochromene, a tryptophan-derived metabolite closely related to a group of mycotoxins including fusarochromanone. Within the pathway, fscH converts the product of fscD into 4-hydroxykyrunenine. The first step of the pathway is the epimerization of L-tryptophan to D-tryptophan in the presence of the NRPS-like tryptophan epimerase fscC. D-tryptophan is subsequently hydroxylated by the tryptophan 6-hydroxylase fscE to yield 6-hydroxytryptophan. The pyrrole ring undergoes cleavaged by the tryptophan 2,3-dioxygenase fscD and is finally converted to 4-hydroxykyrunenine by the hydrolase fscH. The NRPS-like oxidoreductase fscA reduces the carboxyl group to primary alcohol and the DMATS-type prenyltransferase fscG performs prenylation, followed by the formation of a chromene ring catalyzed by the oxidoreductase fscI, which leads to desacetylfusarochromene. Epoxidation by fscF and rearrangement reactions of chromene double bonds convert compound desacetylfusarochromene to fusarochromanones. Although specific acetyltransferases were not found near the fsc gene cluster, several predicted enzymes containing the N-acetyltransferase superfamily domain are present in the genome of F.equiseti. These predicted enzymes may have the potential to convert desacetylfusarochromene to fusarochromene. In Fusarium equiseti (Fusarium scirpi), this protein is Kynurenine formamidase-like hydrolase fscH.